A 235-amino-acid chain; its full sequence is Dephospho-CoA kinase (235 aa).

The DPCK domain occupies 15–219; that stretch reads NVGLTGSISC…KKERLQRKSA (205 aa). Residue 23–28 participates in ATP binding; that stretch reads SCGKST.

It belongs to the CoaE family.

Its subcellular location is the cytoplasm. The catalysed reaction is 3'-dephospho-CoA + ATP = ADP + CoA + H(+). It functions in the pathway cofactor biosynthesis; coenzyme A biosynthesis; CoA from (R)-pantothenate: step 5/5. Catalyzes the phosphorylation of the 3'-hydroxyl group of dephosphocoenzyme A to form coenzyme A. This chain is Dephospho-CoA kinase, found in Syntrophus aciditrophicus (strain SB).